A 114-amino-acid chain; its full sequence is Iron-sulfur cluster insertion protein ErpA (114 aa).

Residues Cys-42, Cys-106, and Cys-108 each coordinate iron-sulfur cluster.

It belongs to the HesB/IscA family. As to quaternary structure, homodimer. Requires iron-sulfur cluster as cofactor.

Required for insertion of 4Fe-4S clusters for at least IspG. The chain is Iron-sulfur cluster insertion protein ErpA from Wigglesworthia glossinidia brevipalpis.